The sequence spans 465 residues: MIMPGMEYSTVSKIYGPLMIVQGVKGVAYGEVVEIETESGEKRKGQVLEAREDMAIVQVFEGTRDLDIKTTRVRFTGETLKVPVSMDMLGRIFNGIGKPIDGGPEIIPEDRRDVHGAPLNPVARAYPRDFIQTGISAIDGMNTLVRGQKLPIFSGSGLPHNMLAAQIARQAKVLGEEEQFAVVFAAMGITYEEANFFKKSFEETGAIERAVLFLNLADDPAIERIITPRMALTVAEYLAFDYDMQVLVILTDMTNYAEALREISAAREEVPGRRGYPGYMYTDLATIYERAGRVRGKKGSITQMPILTMPDDDITHPIPDLTGYITEGQIVLSRELHRKGIYPPIDVLPSLSRLMKDGIGKGRTREDHPQLSQQLYAAYAEGRSLRDLVAVVGEEALSETDRKYLKFADRFEREFVAQRYDEDRSIFETLDLGWELLAELPESELKRVRKEYILKYHPKYRKRGE.

Belongs to the ATPase alpha/beta chains family. As to quaternary structure, has multiple subunits with at least A(3), B(3), C, D, E, F, H, I and proteolipid K(x).

It localises to the cell membrane. Component of the A-type ATP synthase that produces ATP from ADP in the presence of a proton gradient across the membrane. The B chain is a regulatory subunit. This is A-type ATP synthase subunit B from Thermococcus kodakarensis (strain ATCC BAA-918 / JCM 12380 / KOD1) (Pyrococcus kodakaraensis (strain KOD1)).